The sequence spans 98 residues: Acylphosphatase (98 aa).

Residues 12–98 (TYYVRVRGVV…ERRFERFQQQ (87 aa)) enclose the Acylphosphatase-like domain. Residues Arg-27 and Asn-45 contribute to the active site.

Belongs to the acylphosphatase family.

The enzyme catalyses an acyl phosphate + H2O = a carboxylate + phosphate + H(+). The sequence is that of Acylphosphatase (acyP) from Burkholderia lata (strain ATCC 17760 / DSM 23089 / LMG 22485 / NCIMB 9086 / R18194 / 383).